The sequence spans 94 residues: Bacterial microcompartment shell protein PduA (94 aa).

The BMC domain occupies 5 to 89; it reads ALGMVETKGL…PHTDVEKILP (85 aa).

It belongs to the bacterial microcompartments protein family. Homohexamer with a central pore of about 5.6 Angstroms in diameter. The hexamers pack against each other in arrays. Interacts with the N-terminus of PduP which targets PduP to the BMC. Modeling suggests PduC, PduD, PduE, PduL and PduP interact with a cleft formed by the C-terminal segments of 2 adjacent PduA subunits (on the BMC luminal side) in the hexamer.

Its subcellular location is the bacterial microcompartment. It participates in polyol metabolism; 1,2-propanediol degradation. In terms of biological role, one of the major shell proteins of the bacterial microcompartment (BMC) dedicated to 1,2-propanediol (1,2-PD) degradation. At least one of PduA or PduJ is required for BMC assembly; it must be encoded as the first gene in the pdu operon. Not required for structural integrity of BMCs, it is required to mitigate propionaldehyde toxicity. Controls diffusion of 1,2-PD into and propionaldehyde out of the BMC shell; residue 40 is particularly important for pore permeability. Overexpression of this protein leads to aberrant filaments that extend the length of the cell, cross the cleavage furrow and impair division. The filaments form nanotubes with a hollow center. The isolated BMC shell component protein ratio for J:A:B':B:K:T:U is approximately 15:10:7:6:1:1:2. Edge residues (particularly Lys-26) are important for function and assembly of the BMC, and influence array formation by hexamers. Interaction with PduA allows encapsulation of at least PduP in BMCs. Probably also targets PduD to the BMC. PduA is probably the hub for binding multiple enzymes to the interior of the BMC; modeling suggests PduC, PduD, PduE, PduG, PduL and PduP are targeted to PduA. Functionally, the 1,2-PD-specific bacterial microcompartment (BMC) concentrates low levels of 1,2-PD catabolic enzymes, concentrates volatile reaction intermediates thus enhancing pathway flux and keeps the level of toxic, mutagenic propionaldehyde low. The sequence is that of Bacterial microcompartment shell protein PduA from Salmonella typhimurium (strain LT2 / SGSC1412 / ATCC 700720).